A 286-amino-acid chain; its full sequence is Energy-coupling factor transporter ATP-binding protein EcfA2 (286 aa).

An ABC transporter domain is found at Ile-3–Glu-246. Residue Gly-40–Ser-47 coordinates ATP.

Belongs to the ABC transporter superfamily. Energy-coupling factor EcfA family. In terms of assembly, forms a stable energy-coupling factor (ECF) transporter complex composed of 2 membrane-embedded substrate-binding proteins (S component), 2 ATP-binding proteins (A component) and 2 transmembrane proteins (T component).

The protein resides in the cell membrane. ATP-binding (A) component of a common energy-coupling factor (ECF) ABC-transporter complex. Unlike classic ABC transporters this ECF transporter provides the energy necessary to transport a number of different substrates. This Staphylococcus epidermidis (strain ATCC 12228 / FDA PCI 1200) protein is Energy-coupling factor transporter ATP-binding protein EcfA2.